A 275-amino-acid polypeptide reads, in one-letter code: Large ribosomal subunit protein uL2 (275 aa).

The segment at 224-275 (VMNPVDHPHGGGEGKSPIGRPSPVTPWGKPTLGYKTRKKNKASDKFIIKRRK) is disordered. Basic and acidic residues predominate over residues 264-275 (KASDKFIIKRRK).

The protein belongs to the universal ribosomal protein uL2 family. Part of the 50S ribosomal subunit. Forms a bridge to the 30S subunit in the 70S ribosome.

Its function is as follows. One of the primary rRNA binding proteins. Required for association of the 30S and 50S subunits to form the 70S ribosome, for tRNA binding and peptide bond formation. It has been suggested to have peptidyltransferase activity; this is somewhat controversial. Makes several contacts with the 16S rRNA in the 70S ribosome. The chain is Large ribosomal subunit protein uL2 from Acetivibrio thermocellus (strain ATCC 27405 / DSM 1237 / JCM 9322 / NBRC 103400 / NCIMB 10682 / NRRL B-4536 / VPI 7372) (Clostridium thermocellum).